We begin with the raw amino-acid sequence, 125 residues long: RxLR effector protein Avh6 (125 aa).

An N-terminal signal peptide occupies residues 1-25 (MRLSSTTFVVLAAVLLASGTAVSKA). Residues 48–70 (RFLRSHHTEDGEAKLSNYDNEER) carry the RxLR-dEER motif.

Belongs to the RxLR effector family.

The protein localises to the secreted. Its subcellular location is the host cell. Functionally, effector that suppresses plant defense responses during the early stages of pathogen infection. Suppresses cell death induced by effectors and PAMPs in plant hosts. Triggers a hypersensitive response (HR) in the presence of Rps1d. Suppresses BAX-induced cell death and enhan,ced P.capsici infection in Nicotiana benthamiana. Also suppresses effector-triggered immunity induction by associating with Avr1b and Rps1b, suggesting a role in suppressing plant immunity. The protein is RxLR effector protein Avh6 of Phytophthora sojae (strain P6497) (Soybean stem and root rot agent).